The chain runs to 254 residues: Adenosylcobinamide-GDP ribazoletransferase (254 aa).

The next 7 helical transmembrane spans lie at 27–47 (SSLY…VLLA), 50–70 (GMGV…GLIL), 104–124 (VGSF…ICLL), 131–151 (AYGM…LLAA), 170–190 (AGWP…FVLL), 194–214 (LAPS…VGWL), and 233–253 (LVEA…FWAI).

Belongs to the CobS family. It depends on Mg(2+) as a cofactor.

The protein resides in the cell inner membrane. The enzyme catalyses alpha-ribazole + adenosylcob(III)inamide-GDP = adenosylcob(III)alamin + GMP + H(+). The catalysed reaction is alpha-ribazole 5'-phosphate + adenosylcob(III)inamide-GDP = adenosylcob(III)alamin 5'-phosphate + GMP + H(+). Its pathway is cofactor biosynthesis; adenosylcobalamin biosynthesis; adenosylcobalamin from cob(II)yrinate a,c-diamide: step 7/7. Its function is as follows. Joins adenosylcobinamide-GDP and alpha-ribazole to generate adenosylcobalamin (Ado-cobalamin). Also synthesizes adenosylcobalamin 5'-phosphate from adenosylcobinamide-GDP and alpha-ribazole 5'-phosphate. This is Adenosylcobinamide-GDP ribazoletransferase from Chlorobaculum tepidum (strain ATCC 49652 / DSM 12025 / NBRC 103806 / TLS) (Chlorobium tepidum).